Here is a 163-residue protein sequence, read N- to C-terminus: MTTLVVFIQVQGRPGIIETKLGPATTIGELKAALAAVGVNIDVETFIYVEDAENHLHGEHHEPAYGVKHGCRIHVSRCKRIRATVHYLDKTETRDFAPGARIRAVKAHAVDVFHIPPKDAGEHVLQLCNSLERPASDTPLHTLADHNTCAVCFDLVPEKRIEG.

2 consecutive Ubiquitin-like BIL-type domains span residues 4–80 (LVVF…RCKR) and 81–163 (IRAT…RIEG). Gly-163 participates in a covalent cross-link: Glycyl lysine isopeptide (Gly-Lys) (interchain with K-? in central tail fiber acceptor protein).

Component of the Bil (bacterial ISG15-like) antiviral defense system, composed of BilA, BilB, BilC and BilD. The Bil system specifically conjugates a ubiquitin-like moiety (bilA) to the bacteriophage central tail fiber (CTF, or tip attachment protein J) via reactions involving E1 (bilD) and E2 (bilB). Modifies CTF of phage SECphi27 and SECphi4, which probably interferes with assembly of the phage tail. Also modifies T5 baseplate hub protein pb3 (gene D16), but not gp27 of phage T6 (Bil defends against T6). Bil-encoding bacteria produce mostly defective phage SECphi27, many of which have phage assembly defects, including no tails. SECphi27 phage progeny produced in E.coli with the Bil system inject less DNA into naive host cells, maybe because the phage are less able to adsorb and inject their DNA into host cells. Its function is as follows. Expression of the Bil system in E.coli (strain MG1655) confers about 100-fold resistance to phage SECphi27, SECphi18, SECphi6, SECphi4 and T5, but not to SECphi17. When cells expressing the Bil system are infected by phage SECphi27 at low multiplicity of infection (0.03 MOI) the culture survives, at 3.0 MOI the culture collapses at the same time as cells without the Bil system. This Collimonas sp. (strain OK412) protein is Bacterial ISG15-like ubiquitin-like protein BilA.